Consider the following 831-residue polypeptide: Phenylalanine--tRNA ligase beta subunit (831 aa).

In terms of domain architecture, tRNA-binding spans 44–155 (GPVDGPVTVG…GAAEPGADGA (112 aa)). Residues 414 to 489 (WSPPPIRMGV…RLEGLEVIPS (76 aa)) enclose the B5 domain. Mg(2+) contacts are provided by aspartate 467, aspartate 473, glutamate 476, and glutamate 477. The region spanning 737 to 830 (SPYPAVFQDV…AAERVGAVLR (94 aa)) is the FDX-ACB domain.

It belongs to the phenylalanyl-tRNA synthetase beta subunit family. Type 1 subfamily. As to quaternary structure, tetramer of two alpha and two beta subunits. Mg(2+) is required as a cofactor.

Its subcellular location is the cytoplasm. It catalyses the reaction tRNA(Phe) + L-phenylalanine + ATP = L-phenylalanyl-tRNA(Phe) + AMP + diphosphate + H(+). The sequence is that of Phenylalanine--tRNA ligase beta subunit from Mycobacterium bovis (strain ATCC BAA-935 / AF2122/97).